The following is a 235-amino-acid chain: Small ribosomal subunit protein uS3 (235 aa).

The KH type-2 domain occupies 39–107; the sequence is IREILHKELK…DVVINIVEIR (69 aa). A disordered region spans residues 215-235; that stretch reads QDKRMAESDGGGSSRPRRDAA.

This sequence belongs to the universal ribosomal protein uS3 family. As to quaternary structure, part of the 30S ribosomal subunit. Forms a tight complex with proteins S10 and S14.

Its function is as follows. Binds the lower part of the 30S subunit head. Binds mRNA in the 70S ribosome, positioning it for translation. The protein is Small ribosomal subunit protein uS3 of Rhodopseudomonas palustris (strain TIE-1).